We begin with the raw amino-acid sequence, 367 residues long: Alginate lyase (367 aa).

The signal sequence occupies residues 1–24 (MTAFKRIFSPALLVLALYGGAAHA). Substrate is bound by residues 63 to 64 (SK), 136 to 137 (HT), and tyrosine 254.

The protein belongs to the polysaccharide lyase 5 family.

The protein resides in the periplasm. It catalyses the reaction Eliminative cleavage of alginate to give oligosaccharides with 4-deoxy-alpha-L-erythro-hex-4-enuronosyl groups at their non-reducing ends and beta-D-mannuronate at their reducing end.. Functionally, catalyzes the depolymerization of alginate by cleaving the beta-1,4 glycosidic bond between two adjacent sugar residues via a beta-elimination mechanism. May serve to degrade mislocalized alginate that is trapped in the periplasmic space. The polypeptide is Alginate lyase (Pseudomonas putida (strain W619)).